The following is a 145-amino-acid chain: Catabolic 3-dehydroquinase (145 aa).

Catalysis depends on Tyr-24, which acts as the Proton acceptor. Positions 77, 83, and 90 each coordinate substrate. The active-site Proton donor is the His-103. Substrate contacts are provided by residues 104–105 (IT) and Arg-114.

It belongs to the type-II 3-dehydroquinase family. Homododecamer. Adopts a ring-like structure, composed of an arrangement of two hexameric rings stacked on top of one another.

The catalysed reaction is 3-dehydroquinate = 3-dehydroshikimate + H2O. The protein operates within aromatic compound metabolism; 3,4-dihydroxybenzoate biosynthesis; 3,4-dihydroxybenzoate from 3-dehydroquinate: step 1/2. Functionally, is involved in the catabolism of quinate. Allows the utilization of quinate as carbon source via the beta-ketoadipate pathway. This Clavispora lusitaniae (strain ATCC 42720) (Yeast) protein is Catabolic 3-dehydroquinase.